Reading from the N-terminus, the 131-residue chain is SPbeta prophage-derived uncharacterized protein YoqY (131 aa).

The sequence is that of SPbeta prophage-derived uncharacterized protein YoqY (yoqY) from Bacillus subtilis (strain 168).